The following is a 414-amino-acid chain: RNA exonuclease 4 (414 aa).

The interval 1 to 174 (MAKAKVKQDQ…GGTQPEPPKV (174 aa)) is disordered. Positions 26–42 (QTKKQKKKKFWKNHPKI) are enriched in basic residues. Composition is skewed to basic and acidic residues over residues 90–108 (KFPK…DPEP) and 150–161 (KAEGTEQLDPPK). Residues 228-379 (TVAMDCEMVG…QDAQAAMRLY (152 aa)) form the Exonuclease domain.

The protein belongs to the REXO4 family.

It is found in the nucleus. The polypeptide is RNA exonuclease 4 (rexo4) (Xenopus tropicalis (Western clawed frog)).